Here is a 255-residue protein sequence, read N- to C-terminus: Methionine aminopeptidase (255 aa).

Position 76 (H76) interacts with substrate. D93, D104, and H167 together coordinate a divalent metal cation. H174 is a substrate binding site. The a divalent metal cation site is built by E201 and E232.

This sequence belongs to the peptidase M24A family. Methionine aminopeptidase type 1 subfamily. Monomer. Requires Co(2+) as cofactor. It depends on Zn(2+) as a cofactor. The cofactor is Mn(2+). Fe(2+) is required as a cofactor.

It catalyses the reaction Release of N-terminal amino acids, preferentially methionine, from peptides and arylamides.. Functionally, removes the N-terminal methionine from nascent proteins. The N-terminal methionine is often cleaved when the second residue in the primary sequence is small and uncharged (Met-Ala-, Cys, Gly, Pro, Ser, Thr, or Val). Requires deformylation of the N(alpha)-formylated initiator methionine before it can be hydrolyzed. The protein is Methionine aminopeptidase of Treponema pallidum (strain Nichols).